The chain runs to 64 residues: DNA gyrase inhibitor YacG (64 aa).

Zn(2+) is bound by residues cysteine 9, cysteine 12, cysteine 28, and cysteine 32. The tract at residues lysine 45 to lysine 64 is disordered. Over residues serine 54–lysine 64 the composition is skewed to acidic residues.

It belongs to the DNA gyrase inhibitor YacG family. In terms of assembly, interacts with GyrB. It depends on Zn(2+) as a cofactor.

In terms of biological role, inhibits all the catalytic activities of DNA gyrase by preventing its interaction with DNA. Acts by binding directly to the C-terminal domain of GyrB, which probably disrupts DNA binding by the gyrase. This chain is DNA gyrase inhibitor YacG, found in Escherichia fergusonii (strain ATCC 35469 / DSM 13698 / CCUG 18766 / IAM 14443 / JCM 21226 / LMG 7866 / NBRC 102419 / NCTC 12128 / CDC 0568-73).